We begin with the raw amino-acid sequence, 305 residues long: UDP-3-O-acyl-N-acetylglucosamine deacetylase (305 aa).

Positions 79, 238, and 242 each coordinate Zn(2+). His265 (proton donor) is an active-site residue.

It belongs to the LpxC family. Requires Zn(2+) as cofactor.

The catalysed reaction is a UDP-3-O-[(3R)-3-hydroxyacyl]-N-acetyl-alpha-D-glucosamine + H2O = a UDP-3-O-[(3R)-3-hydroxyacyl]-alpha-D-glucosamine + acetate. The protein operates within glycolipid biosynthesis; lipid IV(A) biosynthesis; lipid IV(A) from (3R)-3-hydroxytetradecanoyl-[acyl-carrier-protein] and UDP-N-acetyl-alpha-D-glucosamine: step 2/6. Its function is as follows. Catalyzes the hydrolysis of UDP-3-O-myristoyl-N-acetylglucosamine to form UDP-3-O-myristoylglucosamine and acetate, the committed step in lipid A biosynthesis. The polypeptide is UDP-3-O-acyl-N-acetylglucosamine deacetylase (Pectobacterium atrosepticum (strain SCRI 1043 / ATCC BAA-672) (Erwinia carotovora subsp. atroseptica)).